Consider the following 98-residue polypeptide: Prolactin-releasing peptide (98 aa).

A signal peptide spans 1–22; sequence MKAVGAWLLCLLLLGLALQGAA. Disordered regions lie at residues 52-71 and 79-98; these read RFGR…PRRV and GGAE…LVQE. F53 is subject to Phenylalanine amide. Positions 58–98 are excised as a propeptide; the sequence is AAPGDGPRPGPRRVPACFRLEGGAEPSRALPGRLTAQLVQE.

Post-translationally, amidation of C-terminus is required for receptor interaction. In terms of tissue distribution, medulla oblongata and hypothalamus.

The protein localises to the secreted. Stimulates prolactin (PRL) release and regulates the expression of prolactin through its receptor GPR10. May stimulate lactotrophs directly to secrete PRL. The protein is Prolactin-releasing peptide (PRLH) of Bos taurus (Bovine).